Here is a 667-residue protein sequence, read N- to C-terminus: E3 ubiquitin-protein ligase RNF6 (667 aa).

7 disordered regions span residues 1–25 (MDPS…RRWQ), 75–100 (KEQL…RAHS), 116–216 (GNVT…QGSF), 295–355 (FSSR…TPLS), 396–419 (ETRD…STVE), 507–532 (GDAA…GAEM), and 537–556 (EPAP…QLGR). The segment covering 79–90 (ASQPGSDSAASD) has biased composition (low complexity). Polar residues predominate over residues 116-139 (GNVTRSGQNGNQSWRAVSRTNPNS). The span at 150–163 (INPDNRGSEMHGED) shows a compositional bias: basic and acidic residues. Low complexity predominate over residues 191–200 (SQTSMSSSGP). The span at 296–327 (SSRSRSPIQRQNGTVHHNSQRQGRPVQQTGRN) shows a compositional bias: polar residues. Over residues 516 to 530 (HGRASSQASQAQDGA) the composition is skewed to low complexity. Ser559 is modified (phosphoserine). The RING-type; atypical zinc finger occupies 614 to 655 (CSVCISDYVAGNKLRQLPCLHEFHIHCIDRWLSENCTCPVCR).

The protein belongs to the RNF12 family. Widely expressed with higher expression in the testis in both germ cells and Sertoli cells.

The protein localises to the nucleus. The protein resides in the cytoplasm. It localises to the cell projection. Its subcellular location is the axon. It is found in the PML body. The catalysed reaction is S-ubiquitinyl-[E2 ubiquitin-conjugating enzyme]-L-cysteine + [acceptor protein]-L-lysine = [E2 ubiquitin-conjugating enzyme]-L-cysteine + N(6)-ubiquitinyl-[acceptor protein]-L-lysine.. Its pathway is protein modification; protein ubiquitination. Its function is as follows. E3 ubiquitin-protein ligase mediating 'Lys-48'-linked polyubiquitination of LIMK1 and its subsequent targeting to the proteasome for degradation. Negatively regulates axonal outgrowth through regulation of the LIMK1 turnover. Mediates 'Lys-6' and 'Lys-27'-linked polyubiquitination of AR/androgen receptor thereby modulating its transcriptional activity. May also bind DNA and function as a transcriptional regulator. Mediates polyubiquitination of QKI in macrophages, leading to its degradation. The protein is E3 ubiquitin-protein ligase RNF6 of Mus musculus (Mouse).